A 734-amino-acid polypeptide reads, in one-letter code: Diacylglycerol kinase alpha (734 aa).

EF-hand domains follow at residues 109-144 (RPED…MMRM) and 154-189 (ELRP…TVPL). 9 residues coordinate Ca(2+): Asp122, Asp124, Asn126, Glu133, Asp167, Asp169, Ser171, Ser173, and Glu178. 2 Phorbol-ester/DAG-type zinc fingers span residues 204-252 (QHMW…ALPC) and 268-318 (THVW…GHEC). The segment at 358–505 (NLSTSEALRI…MDRWSVEVIP (148 aa)) is necessary and sufficient for the diacylglycerol kinase activity. Residues 371–505 (SNTHPLLVFV…MDRWSVEVIP (135 aa)) enclose the DAGKc domain. An N6-acetyllysine modification is found at Lys483.

This sequence belongs to the eukaryotic diacylglycerol kinase family. Monomer.

The protein resides in the cytoplasm. It localises to the cytosol. It catalyses the reaction a 1,2-diacyl-sn-glycerol + ATP = a 1,2-diacyl-sn-glycero-3-phosphate + ADP + H(+). The enzyme catalyses a 1-O-alkyl-sn-glycerol + ATP = a 1-O-alkyl-sn-glycero-3-phosphate + ADP + H(+). The catalysed reaction is 1-O-alkyl-2-acyl-sn-glycerol + ATP = 1-O-alkyl-2-acyl-sn-glycero-3-phosphate + ADP + H(+). It carries out the reaction 1,2-dihexadecanoyl-sn-glycerol + ATP = 1,2-dihexadecanoyl-sn-glycero-3-phosphate + ADP + H(+). It catalyses the reaction 1-hexadecanoyl-2-(9Z-octadecenoyl)-sn-glycerol + ATP = 1-hexadecanoyl-2-(9Z-octadecenoyl)-sn-glycero-3-phosphate + ADP + H(+). The enzyme catalyses 2-(9Z-octadecenoyl)-glycerol + ATP = 2-(9Z-octadecenoyl)-sn-glycero-3-phosphate + ADP + H(+). The catalysed reaction is 1,2-di-(9Z-octadecenoyl)-sn-glycerol + ATP = 1,2-di-(9Z-octadecenoyl)-sn-glycero-3-phosphate + ADP + H(+). It carries out the reaction 1-octadecanoyl-2-(5Z,8Z,11Z,14Z-eicosatetraenoyl)-sn-glycerol + ATP = 1-octadecanoyl-2-(5Z,8Z,11Z,14Z-eicosatetraenoyl)-sn-glycero-3-phosphate + ADP + H(+). It catalyses the reaction 1,2-didecanoyl-sn-glycerol + ATP = 1,2-didecanoyl-sn-glycero-3-phosphate + ADP + H(+). The enzyme catalyses 1-O-hexadecyl-2-acetyl-sn-glycerol + ATP = 1-O-hexadecyl-2-acetyl-sn-glycero-3-phosphate + ADP + H(+). The catalysed reaction is 1-O-hexadecyl-2-(5Z,8Z,11Z,14Z-eicosatetraenoyl)-sn-glycerol + ATP = 1-O-hexadecyl-2-(5Z,8Z,11Z,14Z-eicosatetraenoyl)-sn-glycero-3-phosphate + ADP + H(+). It carries out the reaction 1-O-hexadecyl-2-(9Z-octadecenoyl)-sn-glycerol + ATP = 1-O-hexadecyl-2-(9Z-octadecenoyl)-sn-glycero-3-phosphate + ADP + H(+). It catalyses the reaction 1-O-hexadecyl-sn-glycerol + ATP = 1-O-hexadecyl-sn-glycero-3-phosphate + ADP + H(+). It participates in lipid metabolism; glycerolipid metabolism. Its activity is regulated as follows. Stimulated by calcium and phosphatidylserine. Functionally, diacylglycerol kinase that converts diacylglycerol/DAG into phosphatidic acid/phosphatidate/PA and regulates the respective levels of these two bioactive lipids. Thereby, acts as a central switch between the signaling pathways activated by these second messengers with different cellular targets and opposite effects in numerous biological processes. Also plays an important role in the biosynthesis of complex lipids. Can also phosphorylate 1-alkyl-2-acylglycerol in vitro as efficiently as diacylglycerol provided it contains an arachidonoyl group. Also involved in the production of alkyl-lysophosphatidic acid, another bioactive lipid, through the phosphorylation of 1-alkyl-2-acetyl glycerol. The sequence is that of Diacylglycerol kinase alpha (DGKA) from Sus scrofa (Pig).